The sequence spans 974 residues: Leucine-rich repeat receptor-like kinase protein SUNN (974 aa).

An N-terminal signal peptide occupies residues 1-20; it reads MKNITCYLLLLCMLFTTCYS. 4 N-linked (GlcNAc...) asparagine glycosylation sites follow: N75, N104, N123, and N136. 20 LRR repeats span residues 92–116, 117–141, 143–165, 166–188, 189–213, 238–262, 263–286, 288–309, 310–334, 335–358, 360–382, 383–406, 407–430, 431–454, 456–477, 478–501, 503–525, 527–549, 550–573, and 574–598; these read LNML…LSKL, TSLR…TFGM, KLEA…IVSL, MKLK…SYSE, FQKL…LSKL, IKSL…LGNL, ENLD…LSSM, SLMS…TFSK, LKNL…IGDL, PNLE…LGSN, KFIY…LCKS, KKLK…IGPC, KSLE…IFQL, PSVQ…ISGN, LGNL…MKNL, RSLQ…VFAL, VLTR…VTQC, SLTA…MKNL, KVLS…IRFM, and TSLT…QFLV. 2 N-linked (GlcNAc...) asparagine glycosylation sites follow: N250 and N274. 2 N-linked (GlcNAc...) asparagine glycosylation sites follow: N312 and N346. N508 and N513 each carry an N-linked (GlcNAc...) asparagine glycan. Residues N556 and N585 are each glycosylated (N-linked (GlcNAc...) asparagine). The helical transmembrane segment at 635-655 threads the bilayer; sequence VVIAIVFATAVLMVIVTLHMM. The Protein kinase domain occupies 685 to 972; that stretch reads LKEENIIGKG…PPHSTSHNLI (288 aa). ATP contacts are provided by residues 691–699 and K713; that span reads IGKGGAGIV. D810 serves as the catalytic Proton acceptor.

It belongs to the protein kinase superfamily. Ser/Thr protein kinase family. In terms of tissue distribution, expressed in roots and shoots. Expressed in the vasculature of leaves, petioles, stems and roots.

Its subcellular location is the cell membrane. It carries out the reaction L-seryl-[protein] + ATP = O-phospho-L-seryl-[protein] + ADP + H(+). The enzyme catalyses L-threonyl-[protein] + ATP = O-phospho-L-threonyl-[protein] + ADP + H(+). LRR receptor kinase involved in the regulation of root growth and root nodule organogenesis. Involved in long distance nodulation signaling events. Involved in the autoregulation of nodulation (AON), a long distance systemic signaling from root to shoot and back again, which allows legumes to limit the number of root nodules formed based on available nitrogen and previous rhizobial colonization. Acts from shoot to root to control AON. Interacts with CLE12 and CLE13 signaling to control nodule numbers. Required for the modulation of shoot-to-root auxin transport in response to altered nitrogen tissue concentrations and in the absence of rhizobia. Shoot-to-root auxin transport influences lateral root density and length. Involved in the regulation of root colonization by arbuscular mycorrhizal (AM) fungi. Interacts with CLE33 and CL53 signaling to repress strigolactone biosynthetic genes and strigolactone content in the roots, and consequently reduces the promotion of further colonization by AM fungi. This is Leucine-rich repeat receptor-like kinase protein SUNN from Medicago truncatula (Barrel medic).